The sequence spans 286 residues: Protein PXR1 (286 aa).

Residues 1–20 are disordered; it reads MGLAGTKVKQRFGLDPRNTS. Residues 25 to 71 form the G-patch domain; it reads KSRFGHRYLESMGWAPGKGLGLVEHATTTHVKVSVKDDTVGLGAKLA. The tract at residues 148–255 is disordered; sequence EDESEVNFKS…PRKHDQISNV (108 aa). Positions 168 to 198 are enriched in basic and acidic residues; the sequence is PSRDSTSHAKRMRGDESKKSTRDQSKQERKE. Residues 199–230 show a composition bias toward basic residues; it reads KKIKTEKKEKKEKKEKKEKKEKKEKKEKKEKK.

This sequence belongs to the PINX1 family.

It is found in the nucleus. Its subcellular location is the nucleolus. In terms of biological role, involved in rRNA-processing at A0, A1 and A2 sites and negatively regulates telomerase. The chain is Protein PXR1 (PXR1) from Meyerozyma guilliermondii (strain ATCC 6260 / CBS 566 / DSM 6381 / JCM 1539 / NBRC 10279 / NRRL Y-324) (Yeast).